The following is a 212-amino-acid chain: Probable plastid-lipid-associated protein 11, chloroplastic (212 aa).

The transit peptide at methionine 1–serine 25 directs the protein to the chloroplast.

This sequence belongs to the PAP/fibrillin family.

The protein resides in the plastid. The protein localises to the chloroplast thylakoid. This is Probable plastid-lipid-associated protein 11, chloroplastic (PAP11) from Arabidopsis thaliana (Mouse-ear cress).